The chain runs to 184 residues: ATP synthase subunit b, chloroplastic (184 aa).

The helical transmembrane segment at 4–24 (IINLVIFSGYWPIAGNFGLNT) threads the bilayer.

It belongs to the ATPase B chain family. F-type ATPases have 2 components, F(1) - the catalytic core - and F(0) - the membrane proton channel. F(1) has five subunits: alpha(3), beta(3), gamma(1), delta(1), epsilon(1). F(0) has four main subunits: a(1), b(1), b'(1) and c(10-14). The alpha and beta chains form an alternating ring which encloses part of the gamma chain. F(1) is attached to F(0) by a central stalk formed by the gamma and epsilon chains, while a peripheral stalk is formed by the delta, b and b' chains.

It is found in the plastid. The protein localises to the chloroplast thylakoid membrane. Its function is as follows. F(1)F(0) ATP synthase produces ATP from ADP in the presence of a proton or sodium gradient. F-type ATPases consist of two structural domains, F(1) containing the extramembraneous catalytic core and F(0) containing the membrane proton channel, linked together by a central stalk and a peripheral stalk. During catalysis, ATP synthesis in the catalytic domain of F(1) is coupled via a rotary mechanism of the central stalk subunits to proton translocation. Component of the F(0) channel, it forms part of the peripheral stalk, linking F(1) to F(0). The polypeptide is ATP synthase subunit b, chloroplastic (Physcomitrium patens (Spreading-leaved earth moss)).